Consider the following 335-residue polypeptide: Serpentine receptor class alpha-13 (335 aa).

Topologically, residues 1 to 22 (MAIVSSENRTCADEKLLALYQS) are extracellular. Residues 23-43 (WSYIASIVFNCLVPTISTYFL) form a helical membrane-spanning segment. Topologically, residues 44-61 (GRAIFQLCNQATIQYSTR) are cytoplasmic. Residues 62–82 (ILLIATILFAACHQVSYFAFK) form a helical membrane-spanning segment. Topologically, residues 83–107 (IDLLHTMFFKLDQPCFLQRSSYDCR) are extracellular. Residues 108 to 128 (FISIAQTTGVVGMALTGLAMS) form a helical membrane-spanning segment. Residues 129-149 (TDRALALTFPADYHKLKSVPR) are Cytoplasmic-facing. Residues 150–170 (VVLSVFVFIVSFSTWFLLTMN) form a helical membrane-spanning segment. The Extracellular segment spans residues 171–192 (DPLTGYLNHCGFYPSYSVANFQ). The helical transmembrane segment at 193–213 (LMLDVILYLAIFNLIWDVILF) threads the bilayer. Topologically, residues 214 to 235 (YYARQQILWRRSYQFQKRYEAR) are cytoplasmic. The chain crosses the membrane as a helical span at residues 236–255 (ISLNCTQAVFVISICQCISN). Residues 256–278 (GANSGLMRLLMMIGTSITSVTYS) lie on the Extracellular side of the membrane. Residues 279 to 299 (SLLSLFYTAPYSCILLPILMM) traverse the membrane as a helical segment. Over 300-335 (RISEYIREQRTIGILSLRSEKPGLEEHHQRMRAAWS) the chain is Cytoplasmic.

This sequence belongs to the nematode receptor-like protein sra family.

Its subcellular location is the membrane. In terms of biological role, chemosensory receptor that negatively regulates RAS/MAPK signaling during vulva induction and the negative regulation of olfaction of volitile attractants. Required for the suppression of vulval induction in response to food starvation. Signaling acts through the GPA-5 G-alpha protein subunit. The chain is Serpentine receptor class alpha-13 from Caenorhabditis briggsae.